Consider the following 484-residue polypeptide: HTH-type transcriptional regulator TauR (484 aa).

The HTH gntR-type domain occupies 16 to 84 (GSLQHRLRQM…GRSGTFVSAA (69 aa)). Residues 44–63 (TRALAAHLGVARITVTLAYA) constitute a DNA-binding region (H-T-H motif). Lys-330 is subject to N6-(pyridoxal phosphate)lysine.

In the C-terminal section; belongs to the class-I pyridoxal-phosphate-dependent aminotransferase family. Pyridoxal 5'-phosphate is required as a cofactor.

Its function is as follows. Transcriptional activator, which is essential for taurine-dependent expression of the tpa-tauR-xsc operon. Acts by binding to direct repeats in the promoter region. The polypeptide is HTH-type transcriptional regulator TauR (Rhodobacter capsulatus (strain ATCC BAA-309 / NBRC 16581 / SB1003)).